A 226-amino-acid chain; its full sequence is PtdIns3K complex I subunit atg38 (226 aa).

N-acetylserine is present on serine 2. Coiled coils occupy residues 52 to 85 (DVTQ…ENNI) and 182 to 209 (FKEY…LRER).

Belongs to the ATG38 family. As to quaternary structure, homodimer. Component of the autophagy-specific VPS34 PI3-kinase complex I composed of VPS15, VPS30, VPS34, ATG14 and an ATG38 homodimer. Interacts directly with ATG14 and VPS34.

The protein resides in the cytoplasm. It localises to the preautophagosomal structure membrane. Functionally, autophagy-related protein required for cytoplasm to vacuole transport (Cvt) and autophagy as a part of the autophagy-specific VPS34 PI3-kinase complex I. This complex is essential to recruit the ATG8-phosphatidylinositol conjugate and the ATG12-ATG5 conjugate to the pre-autophagosomal structure. ATG38 is required for the integrity of the active PI3-kinase complex I by maintaining an association between VPS15-VPS34 and ATG14-VPS30 subcomplexes. In Saccharomyces cerevisiae (strain ATCC 204508 / S288c) (Baker's yeast), this protein is PtdIns3K complex I subunit atg38.